A 440-amino-acid chain; its full sequence is Nuclear fusion protein BIK1 (440 aa).

The region spanning 26–69 (GPVDTKAGMFAGVDLLANIGKNDGSFMGKKYFQTEYPQSGLFIQ) is the CAP-Gly domain. A phosphoserine mark is found at S95 and S110. The interval 108 to 157 (QFSPMDDPKSPTPMRSFRITSRHSGNQQSMDQEASDHHQQQEFGYDNRED) is disordered. Residues 125–139 (RITSRHSGNQQSMDQ) show a composition bias toward polar residues. Residues 141-157 (ASDHHQQQEFGYDNRED) are compositionally biased toward basic and acidic residues. A coiled-coil region spans residues 190 to 397 (NSSEVTIELR…AQAQTAVESL (208 aa)). The short motif at 416–429 (CEHCDTMGHNTAEC) is the CCHC-box element.

It localises to the cytoplasm. The protein resides in the cytoskeleton. It is found in the microtubule organizing center. Its subcellular location is the spindle pole body. The protein localises to the spindle. Required for nuclear fusion, chromosome disjunction, and nuclear segregation during mitosis. Probably required for the formation or stabilization of microtubules during mitosis and for spindle pole body fusion during conjugation. This is Nuclear fusion protein BIK1 (BIK1) from Saccharomyces cerevisiae (strain ATCC 204508 / S288c) (Baker's yeast).